We begin with the raw amino-acid sequence, 691 residues long: ERI1 exoribonuclease 2 (691 aa).

Positions 37 to 226 constitute an Exonuclease domain; sequence LIVIDFESTC…DDSRNTALLA (190 aa). Residues aspartate 41, glutamate 43, and aspartate 156 each contribute to the Mg(2+) site. Glutamate 43 (proton acceptor) is an active-site residue. AMP is bound at residue glutamate 43. The Proton acceptor role is filled by histidine 213. Residue histidine 213 coordinates AMP. A Mg(2+)-binding site is contributed by aspartate 218. The Zn(2+) site is built by cysteine 597, cysteine 599, cysteine 622, and cysteine 634. The segment at 597 to 643 adopts a GRF-type zinc-finger fold; that stretch reads CKCGRRSKRLVVSNNGPNHGKVFYCCPIGKYQENRKCCGYFKWEQTL.

It belongs to the ERI2 family. The cofactor is Mg(2+).

This Homo sapiens (Human) protein is ERI1 exoribonuclease 2 (ERI2).